Reading from the N-terminus, the 846-residue chain is Translation initiation factor IF-2 (846 aa).

The disordered stretch occupies residues 199-219 (KREEEEKKSKAKKAGGKGFKK). The segment covering 207-219 (SKAKKAGGKGFKK) has biased composition (basic residues). Residues 345–512 (SRAPVVTIMG…AVLLQSEVLE (168 aa)) enclose the tr-type G domain. Positions 354-361 (GHVDHGKT) are G1. 354-361 (GHVDHGKT) lines the GTP pocket. Residues 379-383 (GITQH) form a G2 region. The interval 400-403 (DTPG) is G3. Residues 400-404 (DTPGH) and 454-457 (NKID) contribute to the GTP site. The segment at 454 to 457 (NKID) is G4. Residues 490–492 (SAK) are G5.

It belongs to the TRAFAC class translation factor GTPase superfamily. Classic translation factor GTPase family. IF-2 subfamily.

The protein localises to the cytoplasm. Functionally, one of the essential components for the initiation of protein synthesis. Protects formylmethionyl-tRNA from spontaneous hydrolysis and promotes its binding to the 30S ribosomal subunits. Also involved in the hydrolysis of GTP during the formation of the 70S ribosomal complex. The protein is Translation initiation factor IF-2 of Francisella tularensis subsp. holarctica (strain LVS).